Reading from the N-terminus, the 504-residue chain is Glutamate--tRNA ligase (504 aa).

Residues proline 14–glycine 24 carry the 'HIGH' region motif. Positions lysine 261–arginine 265 match the 'KMSKS' region motif. Lysine 264 lines the ATP pocket.

The protein belongs to the class-I aminoacyl-tRNA synthetase family. Glutamate--tRNA ligase type 1 subfamily. In terms of assembly, monomer.

It localises to the cytoplasm. The catalysed reaction is tRNA(Glu) + L-glutamate + ATP = L-glutamyl-tRNA(Glu) + AMP + diphosphate. Catalyzes the attachment of glutamate to tRNA(Glu) in a two-step reaction: glutamate is first activated by ATP to form Glu-AMP and then transferred to the acceptor end of tRNA(Glu). In Chlorobium luteolum (strain DSM 273 / BCRC 81028 / 2530) (Pelodictyon luteolum), this protein is Glutamate--tRNA ligase.